A 156-amino-acid polypeptide reads, in one-letter code: Phosphopantetheine adenylyltransferase (156 aa).

Thr-9 provides a ligand contact to substrate. ATP-binding positions include 9–10 (TF) and His-17. 3 residues coordinate substrate: Lys-41, Leu-73, and Arg-87. ATP is bound by residues 88–90 (GVR), Glu-98, and 123–129 (WAFVSST).

Belongs to the bacterial CoaD family. In terms of assembly, homohexamer. Mg(2+) is required as a cofactor.

It localises to the cytoplasm. It catalyses the reaction (R)-4'-phosphopantetheine + ATP + H(+) = 3'-dephospho-CoA + diphosphate. The protein operates within cofactor biosynthesis; coenzyme A biosynthesis; CoA from (R)-pantothenate: step 4/5. Reversibly transfers an adenylyl group from ATP to 4'-phosphopantetheine, yielding dephospho-CoA (dPCoA) and pyrophosphate. The protein is Phosphopantetheine adenylyltransferase of Haemophilus influenzae (strain 86-028NP).